The sequence spans 256 residues: Acidic leucine-rich nuclear phosphoprotein 32 family member E (256 aa).

LRR repeat units lie at residues 43–64 (ELEF…PTLS), 65–87 (KLRK…AERC), and 89–110 (NLTY…EALQ). Positions 123–161 (CEITNLEDYRDSIFDLLQQITYLDGFDQEDNEAPDSEDD) constitute an LRRCT domain. The tract at residues 147-256 (GFDQEDNEAP…PEDEGEEEDD (110 aa)) is disordered. 2 stretches are compositionally biased toward acidic residues: residues 148–205 (FDQE…EEEV) and 215–235 (IQDE…EEEA). Residues 204–256 (EVGLSYLMKEEIQDEDDDDDYVEEGGDEEEEAEGIRGEKRKRDPEDEGEEEDD) are ZID domain. Basic and acidic residues predominate over residues 236–247 (EGIRGEKRKRDP).

This sequence belongs to the ANP32 family. As to quaternary structure, component of a SWR1-like complex. Interacts with H2A.Z/H2AZ1.

Its subcellular location is the cytoplasm. It localises to the nucleus. In terms of biological role, histone chaperone that specifically mediates the genome-wide removal of histone H2A.Z/H2AZ1 from the nucleosome: removes H2A.Z/H2AZ1 from its normal sites of deposition, especially from enhancer and insulator regions. Not involved in deposition of H2A.Z/H2AZ1 in the nucleosome. May stabilize the evicted H2A.Z/H2AZ1-H2B dimer, thus shifting the equilibrium towards dissociation and the off-chromatin state. Inhibits activity of protein phosphatase 2A (PP2A). Does not inhibit protein phosphatase 1. May play a role in cerebellar development and synaptogenesis. The sequence is that of Acidic leucine-rich nuclear phosphoprotein 32 family member E (ANP32E) from Gallus gallus (Chicken).